The chain runs to 303 residues: Mesenteric estrogen-dependent adipogenesis protein (303 aa).

Highly expressed in the visceral fat depot.

The protein localises to the cytoplasm. Functionally, involved in processes that promote adipocyte differentiation, lipid accumulation, and glucose uptake in mature adipocytes. The sequence is that of Mesenteric estrogen-dependent adipogenesis protein (MEDAG) from Homo sapiens (Human).